The chain runs to 209 residues: Regulator of G-protein signaling 1 (209 aa).

The tract at residues 18–42 is disordered; it reads FFSASPKDSKEPSHSLLDDNKQKKR. Residues 24 to 38 show a composition bias toward basic and acidic residues; the sequence is KDSKEPSHSLLDDNK. Residues 85 to 200 form the RGS domain; the sequence is SLEKLLANQM…LKSNIYLNLL (116 aa).

As to quaternary structure, interacts with GNAI1 and GNAQ. Expressed in multiple tissues.

Its subcellular location is the cell membrane. The protein localises to the cytoplasm. The protein resides in the cytosol. Its function is as follows. Regulates G protein-coupled receptor signaling cascades, including signaling downstream of the N-formylpeptide chemoattractant receptors and leukotriene receptors. Inhibits B cell chemotaxis toward CXCL12. Inhibits signal transduction by increasing the GTPase activity of G protein alpha subunits, thereby driving them into their inactive GDP-bound form. This Rattus norvegicus (Rat) protein is Regulator of G-protein signaling 1 (Rgs1).